The sequence spans 381 residues: Teichoic acid glycerol-phosphate primase (381 aa).

The protein belongs to the CDP-glycerol glycerophosphotransferase family.

The protein localises to the cell membrane. The catalysed reaction is N-acetyl-beta-D-mannosaminyl-(1-&gt;4)-N-acetyl-alpha-D-glucosaminyl di-trans,octa-cis-undecaprenyl diphosphate + CDP-glycerol = 4-O-[(2R)-glycerylphospho]-N-acetyl-beta-D-mannosaminyl-(1-&gt;4)-N-acetyl-alpha-D-glucosaminyl di-trans,octa-cis-undecaprenyl diphosphate + CMP + H(+). Its pathway is cell wall biogenesis; poly(glycerol phosphate) teichoic acid biosynthesis. Its function is as follows. Catalyzes the addition of a single glycerol phosphate residue to the prenoldiphosphate-linked disaccharide, as a primer for polymerisation by TagF. This Bacillus subtilis (strain 168) protein is Teichoic acid glycerol-phosphate primase (tagB).